The sequence spans 226 residues: Elongation factor G (226 aa).

It belongs to the GTP-binding elongation factor family. EF-G/EF-2 subfamily.

The protein resides in the cytoplasm. Functionally, catalyzes the GTP-dependent ribosomal translocation step during translation elongation. During this step, the ribosome changes from the pre-translocational (PRE) to the post-translocational (POST) state as the newly formed A-site-bound peptidyl-tRNA and P-site-bound deacylated tRNA move to the P and E sites, respectively. Catalyzes the coordinated movement of the two tRNA molecules, the mRNA and conformational changes in the ribosome. The polypeptide is Elongation factor G (fusA) (Neisseria gonorrhoeae).